We begin with the raw amino-acid sequence, 535 residues long: NAD(P)H-quinone oxidoreductase chain 4 2 (535 aa).

14 consecutive transmembrane segments (helical) span residues 9–29 (FPWL…IPLI), 51–71 (WFAL…FYVG), 106–126 (LILL…PVTL), 130–150 (LFYF…AVQD), 152–172 (LLFF…LSIW), 184–204 (FILY…AMAF), 227–247 (LLLY…FPLH), 258–278 (TAPV…YALM), 290–310 (LYFA…AALT), 326–346 (ISHM…GMSG), 347–367 (AMLQ…LVGA), 399–419 (LASL…VFIG), 432–452 (LVVV…LLSM), and 479–499 (VFII…PKLV).

It belongs to the complex I subunit 4 family.

It is found in the cellular thylakoid membrane. It carries out the reaction a plastoquinone + NADH + (n+1) H(+)(in) = a plastoquinol + NAD(+) + n H(+)(out). The enzyme catalyses a plastoquinone + NADPH + (n+1) H(+)(in) = a plastoquinol + NADP(+) + n H(+)(out). Its function is as follows. NDH-1 shuttles electrons from NAD(P)H, via FMN and iron-sulfur (Fe-S) centers, to quinones in the respiratory chain. The immediate electron acceptor for the enzyme in this species is believed to be plastoquinone. Couples the redox reaction to proton translocation (for every two electrons transferred, four hydrogen ions are translocated across the cytoplasmic membrane), and thus conserves the redox energy in a proton gradient. The protein is NAD(P)H-quinone oxidoreductase chain 4 2 of Synechococcus sp. (strain JA-3-3Ab) (Cyanobacteria bacterium Yellowstone A-Prime).